Here is a 290-residue protein sequence, read N- to C-terminus: 4-hydroxy-tetrahydrodipicolinate synthase (290 aa).

Thr44 contributes to the pyruvate binding site. Tyr132 functions as the Proton donor/acceptor in the catalytic mechanism. Lys160 serves as the catalytic Schiff-base intermediate with substrate. A pyruvate-binding site is contributed by Ile202.

Belongs to the DapA family. In terms of assembly, homotetramer; dimer of dimers.

The protein localises to the cytoplasm. It catalyses the reaction L-aspartate 4-semialdehyde + pyruvate = (2S,4S)-4-hydroxy-2,3,4,5-tetrahydrodipicolinate + H2O + H(+). The protein operates within amino-acid biosynthesis; L-lysine biosynthesis via DAP pathway; (S)-tetrahydrodipicolinate from L-aspartate: step 3/4. Catalyzes the condensation of (S)-aspartate-beta-semialdehyde [(S)-ASA] and pyruvate to 4-hydroxy-tetrahydrodipicolinate (HTPA). This Cereibacter sphaeroides (strain ATCC 17025 / ATH 2.4.3) (Rhodobacter sphaeroides) protein is 4-hydroxy-tetrahydrodipicolinate synthase.